A 494-amino-acid chain; its full sequence is Inosine-5'-monophosphate dehydrogenase (494 aa).

2 consecutive CBS domains span residues 93-154 (IIRN…DEKI) and 158-217 (MTTN…CKDS). NAD(+) contacts are provided by residues aspartate 251 and 301 to 303 (GIG). Residues glycine 303 and glycine 305 each contribute to the K(+) site. Position 306 (serine 306) interacts with IMP. Cysteine 308 serves as a coordination point for K(+). The active-site Thioimidate intermediate is cysteine 308. Residues 341–343 (DGG), 364–365 (GS), and 388–392 (YRGMG) each bind IMP. Arginine 406 acts as the Proton acceptor in catalysis. Glutamate 421 provides a ligand contact to IMP. Glutamate 475, serine 476, and histidine 477 together coordinate K(+).

The protein belongs to the IMPDH/GMPR family. As to quaternary structure, homotetramer. K(+) is required as a cofactor.

The catalysed reaction is IMP + NAD(+) + H2O = XMP + NADH + H(+). Its pathway is purine metabolism; XMP biosynthesis via de novo pathway; XMP from IMP: step 1/1. Its activity is regulated as follows. Mycophenolic acid (MPA) is a non-competitive inhibitor that prevents formation of the closed enzyme conformation by binding to the same site as the amobile flap. In contrast, mizoribine monophosphate (MZP) is a competitive inhibitor that induces the closed conformation. MPA is a potent inhibitor of mammalian IMPDHs but a poor inhibitor of the bacterial enzymes. MZP is a more potent inhibitor of bacterial IMPDH. Its function is as follows. Catalyzes the conversion of inosine 5'-phosphate (IMP) to xanthosine 5'-phosphate (XMP), the first committed and rate-limiting step in the de novo synthesis of guanine nucleotides, and therefore plays an important role in the regulation of cell growth. The chain is Inosine-5'-monophosphate dehydrogenase from Chlorobaculum tepidum (strain ATCC 49652 / DSM 12025 / NBRC 103806 / TLS) (Chlorobium tepidum).